A 500-amino-acid chain; its full sequence is Probable cation transporter HKT1;4 (500 aa).

The Cytoplasmic segment spans residues 1–12 (MPTSRRALAGGA). The next 2 membrane-spanning stretches (helical) occupy residues 13-33 (LSMH…LLGV) and 74-94 (LVVL…LVGL). Residues 95–156 (ASKWSKLRSD…ADTLRHNAVR (62 aa)) are Cytoplasmic-facing. The segment at 121–145 (ADIDGGDVENPTSSGEEAASRRRPM) is disordered. The next 2 helical transmembrane spans lie at 157 to 177 (ALFY…AVAV) and 239 to 259 (VLAG…AAAA). Over 260–290 (ATRREELVEMAREGGRAAAAGYAHLMPARRC) the chain is Cytoplasmic. Helical transmembrane passes span 291 to 311 (WMLA…VCGM) and 346 to 366 (LSIL…LPPY). Over 367-390 (TTWFPFEENSTTKDSNAENQGIRL) the chain is Cytoplasmic. Helical transmembrane passes span 391 to 411 (LEST…AICI) and 464 to 484 (GFVG…MFFG). Residues 485 to 500 (RLKKFSMKGGKAWKLS) are Cytoplasmic-facing.

Belongs to the TrkH potassium transport family. HKT (TC 2.A.38.3) subfamily.

The protein localises to the membrane. In terms of biological role, probable cation transporter. May be involved in regulation of potassium-sodium homeostasis. The chain is Probable cation transporter HKT1;4 from Oryza sativa subsp. japonica (Rice).